The sequence spans 62 residues: Photosystem II reaction center protein Z (62 aa).

The next 2 helical transmembrane spans lie at 8 to 28 and 41 to 61; these read AVFA…VVFA and FSGT…NSLI.

This sequence belongs to the PsbZ family. In terms of assembly, PSII is composed of 1 copy each of membrane proteins PsbA, PsbB, PsbC, PsbD, PsbE, PsbF, PsbH, PsbI, PsbJ, PsbK, PsbL, PsbM, PsbT, PsbY, PsbZ, Psb30/Ycf12, at least 3 peripheral proteins of the oxygen-evolving complex and a large number of cofactors. It forms dimeric complexes.

It localises to the plastid. The protein localises to the chloroplast thylakoid membrane. In terms of biological role, may control the interaction of photosystem II (PSII) cores with the light-harvesting antenna, regulates electron flow through the 2 photosystem reaction centers. PSII is a light-driven water plastoquinone oxidoreductase, using light energy to abstract electrons from H(2)O, generating a proton gradient subsequently used for ATP formation. The protein is Photosystem II reaction center protein Z of Oenothera elata subsp. hookeri (Hooker's evening primrose).